Here is a 258-residue protein sequence, read N- to C-terminus: Tritrans,polycis-undecaprenyl-diphosphate synthase (geranylgeranyl-diphosphate specific) (258 aa).

Asp37 is an active-site residue. Asp37 is a Mg(2+) binding site. Substrate is bound by residues 38–41, His54, and 82–84; these read GNRR and STE. The Proton acceptor role is filled by Asn85. Substrate contacts are provided by residues Phe86, Arg88, Arg207, and 213 to 215; that span reads RIS. Glu226 lines the Mg(2+) pocket.

Belongs to the UPP synthase family. As to quaternary structure, homodimer. Requires Mg(2+) as cofactor.

The catalysed reaction is geranylgeranyl diphosphate + 7 isopentenyl diphosphate = tri-trans,hepta-cis-undecaprenyl diphosphate + 7 diphosphate. Catalyzes the sequential condensation of isopentenyl diphosphate (IPP) with geranylgeranyl diphosphate (GGPP) to yield (2Z,6Z,10Z,14Z,18Z,22Z,26Z,30E,34E,38E)-undecaprenyl diphosphate (tritrans,heptacis-UPP). It is probably the precursor of glycosyl carrier lipids. This is Tritrans,polycis-undecaprenyl-diphosphate synthase (geranylgeranyl-diphosphate specific) from Thermoplasma acidophilum (strain ATCC 25905 / DSM 1728 / JCM 9062 / NBRC 15155 / AMRC-C165).